The primary structure comprises 397 residues: Mannan endo-1,4-beta-mannosidase 1 (397 aa).

Positions 1–23 (MSYARRSCICGLFLLFLALVCEA) are cleaved as a signal peptide. Substrate is bound by residues Trp-83 and Asn-198. The active-site Proton donor is the Glu-199. Tyr-276 contacts substrate. The active-site Nucleophile is Glu-316. Position 354 (Trp-354) interacts with substrate.

Belongs to the glycosyl hydrolase 5 (cellulase A) family.

It localises to the secreted. The catalysed reaction is Random hydrolysis of (1-&gt;4)-beta-D-mannosidic linkages in mannans, galactomannans and glucomannans.. In Solanum lycopersicum (Tomato), this protein is Mannan endo-1,4-beta-mannosidase 1 (MAN1).